The primary structure comprises 363 residues: Aminomethyltransferase (363 aa).

It belongs to the GcvT family. In terms of assembly, the glycine cleavage system is composed of four proteins: P, T, L and H.

It catalyses the reaction N(6)-[(R)-S(8)-aminomethyldihydrolipoyl]-L-lysyl-[protein] + (6S)-5,6,7,8-tetrahydrofolate = N(6)-[(R)-dihydrolipoyl]-L-lysyl-[protein] + (6R)-5,10-methylene-5,6,7,8-tetrahydrofolate + NH4(+). Functionally, the glycine cleavage system catalyzes the degradation of glycine. This Teredinibacter turnerae (strain ATCC 39867 / T7901) protein is Aminomethyltransferase.